We begin with the raw amino-acid sequence, 919 residues long: Probable dipeptidyl-aminopeptidase B (919 aa).

Over residues 1–10 (MRPSDDHGET) the composition is skewed to basic and acidic residues. The interval 1 to 50 (MRPSDDHGETSEFLPITRSRSVSAASQTSTDSSLSTESLFPGEQKPFPNV) is disordered. Topologically, residues 1 to 92 (MRPSDDHGET…AATGGGRARR (92 aa)) are cytoplasmic. A compositionally biased stretch (low complexity) spans 21–38 (SVSAASQTSTDSSLSTES). Residues 93–113 (IFWILVLLCLGGWLLAFALFL) traverse the membrane as a helical; Signal-anchor for type II membrane protein segment. The Vacuolar segment spans residues 114–919 (TGGRANYQTA…MKRSLPLLYP (806 aa)). N-linked (GlcNAc...) asparagine glycans are attached at residues Asn200, Asn352, and Asn643. The Charge relay system role is filled by Ser757. Residue Asn811 is glycosylated (N-linked (GlcNAc...) asparagine). Residues Asp834 and His867 each act as charge relay system in the active site.

Belongs to the peptidase S9B family.

The protein resides in the vacuole membrane. The catalysed reaction is Release of an N-terminal dipeptide, Xaa-Yaa-|-Zaa-, from a polypeptide, preferentially when Yaa is Pro, provided Zaa is neither Pro nor hydroxyproline.. Its function is as follows. Type IV dipeptidyl-peptidase which removes N-terminal dipeptides sequentially from polypeptides having unsubstituted N-termini provided that the penultimate residue is proline. The polypeptide is Probable dipeptidyl-aminopeptidase B (dapB) (Neosartorya fischeri (strain ATCC 1020 / DSM 3700 / CBS 544.65 / FGSC A1164 / JCM 1740 / NRRL 181 / WB 181) (Aspergillus fischerianus)).